The chain runs to 139 residues: Putative pre-16S rRNA nuclease (139 aa).

This sequence belongs to the YqgF nuclease family.

It localises to the cytoplasm. Functionally, could be a nuclease involved in processing of the 5'-end of pre-16S rRNA. This chain is Putative pre-16S rRNA nuclease, found in Streptococcus equi subsp. zooepidemicus (strain H70).